The primary structure comprises 425 residues: Calreticulin-1 (425 aa).

A signal peptide spans 1-22; the sequence is MAKLNPKFISLILFALVVIVSA. The N-linked (GlcNAc...) asparagine glycan is linked to asparagine 59. A disulfide bridge links cysteine 108 with cysteine 140. The an alpha-D-glucoside site is built by tyrosine 112, lysine 114, tyrosine 131, and aspartate 138. Asparagine 154 carries N-linked (GlcNAc...) asparagine glycosylation. A run of 7 repeats spans residues 194–205, 213–224, 230–241, 248–259, 263–273, 277–287, and 291–301. The 4 X approximate repeats stretch occupies residues 194 to 259; sequence KQTGSLYSDW…DAKKPEDWDD (66 aa). Composition is skewed to basic and acidic residues over residues 213-235 and 241-255; these read DPSA…EDTK and DIPK…KKPE. Residues 213 to 281 form a disordered region; that stretch reads DPSAKKPEDW…NPEYNGEWKP (69 aa). A 3 X approximate repeats region spans residues 263–301; sequence GEWTAPTIPNPEYNGEWKPKKIKNPAYKGKWKAPMIDNP. Glutamate 321 contacts an alpha-D-glucoside. The span at 348–378 shows a compositional bias: basic and acidic residues; the sequence is EETWGKHKDAEKAAFDEAEKKREEEESKDAP. The tract at residues 348–425 is disordered; that stretch reads EETWGKHKDA…EETDAAHDEL (78 aa). Residues 379-398 are compositionally biased toward acidic residues; that stretch reads AESDAEEEAEDDDNEGDDSD. Phosphoserine is present on residues serine 381 and serine 397. A glycan (N-linked (GlcNAc...) asparagine) is linked at asparagine 399. Residues 399–412 are compositionally biased toward basic and acidic residues; the sequence is NESKSEETKEAEET. Residues 422–425 carry the Prevents secretion from ER motif; that stretch reads HDEL.

This sequence belongs to the calreticulin family.

It localises to the endoplasmic reticulum lumen. In terms of biological role, molecular calcium-binding chaperone promoting folding, oligomeric assembly and quality control in the ER via the calreticulin/calnexin cycle. This lectin may interact transiently with almost all of the monoglucosylated glycoproteins that are synthesized in the ER. The polypeptide is Calreticulin-1 (CRT1) (Arabidopsis thaliana (Mouse-ear cress)).